Here is a 330-residue protein sequence, read N- to C-terminus: Free fatty acid receptor 2 (330 aa).

Residues 1-12 (MLPDWKSSLILM) lie on the Extracellular side of the membrane. A helical transmembrane segment spans residues 13 to 33 (AYIIIFLTGLPANLLALRAFV). The Cytoplasmic segment spans residues 34–41 (GRIRQPQP). A helical membrane pass occupies residues 42 to 62 (APVHILLLSLTLADLLLLLLL). At 63–84 (PFKIIEAASNFRWYLPKVVCAL) the chain is on the extracellular side. The helical transmembrane segment at 85–105 (TSFGFYSSIYCSTWLLAGISI) threads the bilayer. The Cytoplasmic segment spans residues 106–126 (ERYLGVAFPVQYKLSRRPLYG). The helical transmembrane segment at 127 to 147 (VIAALVAWVMSFGHCTIVIIV) threads the bilayer. Residues 148–173 (QYLNTTEQVRSGNEITCYENFTDNQL) lie on the Extracellular side of the membrane. N-linked (GlcNAc...) asparagine glycans are attached at residues Asn151 and Asn167. A helical membrane pass occupies residues 174-194 (DVVLPVRLELCLVLFFIPMAV). The Cytoplasmic portion of the chain corresponds to 195–219 (TIFCYWRFVWIMLSQPLVGAQRRRR). Residues 220 to 240 (AVGLAVVTLLNFLVCFGPYNV) form a helical membrane-spanning segment. The Extracellular segment spans residues 241–255 (SHLVGYHQRKSPWWR). Residues 256 to 276 (SIAVVFSSLNASLDPLLFYFS) traverse the membrane as a helical segment. The Cytoplasmic portion of the chain corresponds to 277-330 (SSVVRRAFGRGLQVLRNQGSSLLGRRGKDTAEGTNEDRGVGQGEGMPSSDFTTE). Residues 299–330 (LGRRGKDTAEGTNEDRGVGQGEGMPSSDFTTE) form a disordered region. A compositionally biased stretch (basic and acidic residues) spans 302–315 (RGKDTAEGTNEDRG).

Belongs to the G-protein coupled receptor 1 family. In terms of assembly, interacts with FCN1 (via Fibrinogen C-terminal domain). As to expression, expressed at relatively high levels in peripheral blood leukocytes and, to lesser extent, in spleen.

It is found in the cell membrane. In terms of biological role, g protein-coupled receptor that is activated by a major product of dietary fiber digestion, the short chain fatty acids (SCFAs), and that plays a role in the regulation of whole-body energy homeostasis and in intestinal immunity. In omnivorous mammals, the short chain fatty acids acetate, propionate and butyrate are produced primarily by the gut microbiome that metabolizes dietary fibers. SCFAs serve as a source of energy but also act as signaling molecules. That G protein-coupled receptor is probably coupled to the pertussis toxin-sensitive, G(i/o)-alpha family of G proteins but also to the Gq family. Its activation results in the formation of inositol 1,4,5-trisphosphate, the mobilization of intracellular calcium, the phosphorylation of the MAPK3/ERK1 and MAPK1/ERK2 kinases and the inhibition of intracellular cAMP accumulation. May play a role in glucose homeostasis by regulating the secretion of GLP-1, in response to short-chain fatty acids accumulating in the intestine. May also regulate the production of LEP/Leptin, a hormone acting on the central nervous system to inhibit food intake. Finally, may also regulate whole-body energy homeostasis through adipogenesis regulating both differentiation and lipid storage of adipocytes. In parallel to its role in energy homeostasis, may also mediate the activation of the inflammatory and immune responses by SCFA in the intestine, regulating the rapid production of chemokines and cytokines. May also play a role in the resolution of the inflammatory response and control chemotaxis in neutrophils. In addition to SCFAs, may also be activated by the extracellular lectin FCN1 in a process leading to activation of monocytes and inducing the secretion of interleukin-8/IL-8 in response to the presence of microbes. Among SCFAs, the fatty acids containing less than 6 carbons, the most potent activators are probably acetate, propionate and butyrate. Exhibits a SCFA-independent constitutive G protein-coupled receptor activity. The protein is Free fatty acid receptor 2 (FFAR2) of Homo sapiens (Human).